We begin with the raw amino-acid sequence, 229 residues long: Uracil-DNA glycosylase (229 aa).

Residue aspartate 64 is the Proton acceptor of the active site.

It belongs to the uracil-DNA glycosylase (UDG) superfamily. UNG family.

The protein resides in the cytoplasm. The enzyme catalyses Hydrolyzes single-stranded DNA or mismatched double-stranded DNA and polynucleotides, releasing free uracil.. In terms of biological role, excises uracil residues from the DNA which can arise as a result of misincorporation of dUMP residues by DNA polymerase or due to deamination of cytosine. In Escherichia coli O45:K1 (strain S88 / ExPEC), this protein is Uracil-DNA glycosylase.